Reading from the N-terminus, the 155-residue chain is 6,7-dimethyl-8-ribityllumazine synthase (155 aa).

5-amino-6-(D-ribitylamino)uracil contacts are provided by residues Phe24, 58-60, and 82-84; these read AFE and VLI. 87 to 88 contributes to the (2S)-2-hydroxy-3-oxobutyl phosphate binding site; the sequence is AT. The active-site Proton donor is the His90. Phe115 provides a ligand contact to 5-amino-6-(D-ribitylamino)uracil. (2S)-2-hydroxy-3-oxobutyl phosphate is bound at residue Arg129.

The protein belongs to the DMRL synthase family.

It carries out the reaction (2S)-2-hydroxy-3-oxobutyl phosphate + 5-amino-6-(D-ribitylamino)uracil = 6,7-dimethyl-8-(1-D-ribityl)lumazine + phosphate + 2 H2O + H(+). Its pathway is cofactor biosynthesis; riboflavin biosynthesis; riboflavin from 2-hydroxy-3-oxobutyl phosphate and 5-amino-6-(D-ribitylamino)uracil: step 1/2. Functionally, catalyzes the formation of 6,7-dimethyl-8-ribityllumazine by condensation of 5-amino-6-(D-ribitylamino)uracil with 3,4-dihydroxy-2-butanone 4-phosphate. This is the penultimate step in the biosynthesis of riboflavin. The sequence is that of 6,7-dimethyl-8-ribityllumazine synthase from Chloroherpeton thalassium (strain ATCC 35110 / GB-78).